Here is a 217-residue protein sequence, read N- to C-terminus: Probable transaldolase (217 aa).

K83 (schiff-base intermediate with substrate) is an active-site residue.

It belongs to the transaldolase family. Type 3B subfamily.

It localises to the cytoplasm. It carries out the reaction D-sedoheptulose 7-phosphate + D-glyceraldehyde 3-phosphate = D-erythrose 4-phosphate + beta-D-fructose 6-phosphate. The protein operates within carbohydrate degradation; pentose phosphate pathway; D-glyceraldehyde 3-phosphate and beta-D-fructose 6-phosphate from D-ribose 5-phosphate and D-xylulose 5-phosphate (non-oxidative stage): step 2/3. Functionally, transaldolase is important for the balance of metabolites in the pentose-phosphate pathway. The protein is Probable transaldolase of Novosphingobium aromaticivorans (strain ATCC 700278 / DSM 12444 / CCUG 56034 / CIP 105152 / NBRC 16084 / F199).